Reading from the N-terminus, the 67-residue chain is Probable Sec-independent protein translocase protein TatE (67 aa).

A helical membrane pass occupies residues 1 to 21 (MEGISIAKLLIIGALIVLLFG). The interval 46 to 67 (EDTSATRTTAEDVPAERVVHKD) is disordered.

The protein belongs to the TatA/E family. TatE subfamily.

It is found in the cell inner membrane. In terms of biological role, part of the twin-arginine translocation (Tat) system that transports large folded proteins containing a characteristic twin-arginine motif in their signal peptide across membranes. TatE shares overlapping functions with TatA. The sequence is that of Probable Sec-independent protein translocase protein TatE from Pantoea vagans (strain C9-1) (Pantoea agglomerans (strain C9-1)).